The following is a 133-amino-acid chain: Large-conductance mechanosensitive channel (133 aa).

The next 2 helical transmembrane spans lie at 14 to 34 (VVDLAVAVVIGAAFGTVVTTL) and 73 to 93 (FITVLLNFVIIAAAIYFMVVV).

This sequence belongs to the MscL family. As to quaternary structure, homopentamer.

The protein localises to the cell membrane. Its function is as follows. Channel that opens in response to stretch forces in the membrane lipid bilayer. May participate in the regulation of osmotic pressure changes within the cell. This is Large-conductance mechanosensitive channel from Renibacterium salmoninarum (strain ATCC 33209 / DSM 20767 / JCM 11484 / NBRC 15589 / NCIMB 2235).